We begin with the raw amino-acid sequence, 340 residues long: Putative esterase YheT (340 aa).

The 240-residue stretch at 73–312 (PRLVVFHGLE…TEHGGHVGFI (240 aa)) folds into the AB hydrolase-1 domain. Catalysis depends on charge relay system residues serine 153, aspartate 280, and histidine 308.

Belongs to the AB hydrolase superfamily. AB hydrolase 4 family.

The protein is Putative esterase YheT (yheT) of Escherichia coli (strain K12).